Consider the following 347-residue polypeptide: NADH-ubiquinone oxidoreductase chain 2 (347 aa).

11 helical membrane-spanning segments follow: residues 3–23, 25–45, 59–79, 96–116, 127–147, 148–168, 178–198, 201–221, 247–267, 276–296, and 325–345; these read PLIMSIILATIILGTTIVMTG, HWLMIWIGFEMNMLAIIPMLM, YFFTQATASMLLMLAGIINLM, IIMTLALAMKLGLAPFHFWVP, GLILLTWQKLASMTGLYMISP, GINLNMLMTMSMLSIAIGGWG, IMAYSSIAHMGWMTAILIYNP, TLLNLVIYILMTTTMFMLFMI, TLLSMGGLPPLMGFLPKWMII, IVLPTIMAITALLNLFFYMRL, and LLTPMIMMSTLTLPLAPMMMI.

It belongs to the complex I subunit 2 family. Core subunit of respiratory chain NADH dehydrogenase (Complex I) which is composed of 45 different subunits. Interacts with TMEM242.

It localises to the mitochondrion inner membrane. The catalysed reaction is a ubiquinone + NADH + 5 H(+)(in) = a ubiquinol + NAD(+) + 4 H(+)(out). Functionally, core subunit of the mitochondrial membrane respiratory chain NADH dehydrogenase (Complex I) which catalyzes electron transfer from NADH through the respiratory chain, using ubiquinone as an electron acceptor. Essential for the catalytic activity and assembly of complex I. The protein is NADH-ubiquinone oxidoreductase chain 2 of Ozimops beccarii (Beccari's free-tailed bat).